The following is a 195-amino-acid chain: ATP-dependent Clp protease proteolytic subunit (195 aa).

The active-site Nucleophile is serine 99. The active site involves histidine 124.

This sequence belongs to the peptidase S14 family. Fourteen ClpP subunits assemble into 2 heptameric rings which stack back to back to give a disk-like structure with a central cavity, resembling the structure of eukaryotic proteasomes.

The protein localises to the cytoplasm. It carries out the reaction Hydrolysis of proteins to small peptides in the presence of ATP and magnesium. alpha-casein is the usual test substrate. In the absence of ATP, only oligopeptides shorter than five residues are hydrolyzed (such as succinyl-Leu-Tyr-|-NHMec, and Leu-Tyr-Leu-|-Tyr-Trp, in which cleavage of the -Tyr-|-Leu- and -Tyr-|-Trp bonds also occurs).. In terms of biological role, cleaves peptides in various proteins in a process that requires ATP hydrolysis. Has a chymotrypsin-like activity. Plays a major role in the degradation of misfolded proteins. This Coxiella burnetii (strain CbuG_Q212) (Coxiella burnetii (strain Q212)) protein is ATP-dependent Clp protease proteolytic subunit.